We begin with the raw amino-acid sequence, 281 residues long: 2-dehydro-3-deoxyphosphooctonate aldolase (281 aa).

The protein belongs to the KdsA family.

Its subcellular location is the cytoplasm. It catalyses the reaction D-arabinose 5-phosphate + phosphoenolpyruvate + H2O = 3-deoxy-alpha-D-manno-2-octulosonate-8-phosphate + phosphate. Its pathway is carbohydrate biosynthesis; 3-deoxy-D-manno-octulosonate biosynthesis; 3-deoxy-D-manno-octulosonate from D-ribulose 5-phosphate: step 2/3. It functions in the pathway bacterial outer membrane biogenesis; lipopolysaccharide biosynthesis. The protein is 2-dehydro-3-deoxyphosphooctonate aldolase of Marinobacter nauticus (strain ATCC 700491 / DSM 11845 / VT8) (Marinobacter aquaeolei).